A 434-amino-acid chain; its full sequence is Glutamyl-tRNA reductase (434 aa).

Residues 49-52 (TCNR), serine 109, 114-116 (EPQ), and glutamine 120 each bind substrate. Cysteine 50 (nucleophile) is an active-site residue. 189 to 194 (GAGEMC) contributes to the NADP(+) binding site.

Belongs to the glutamyl-tRNA reductase family. In terms of assembly, homodimer.

The enzyme catalyses (S)-4-amino-5-oxopentanoate + tRNA(Glu) + NADP(+) = L-glutamyl-tRNA(Glu) + NADPH + H(+). Its pathway is porphyrin-containing compound metabolism; protoporphyrin-IX biosynthesis; 5-aminolevulinate from L-glutamyl-tRNA(Glu): step 1/2. Functionally, catalyzes the NADPH-dependent reduction of glutamyl-tRNA(Glu) to glutamate 1-semialdehyde (GSA). The protein is Glutamyl-tRNA reductase of Geotalea daltonii (strain DSM 22248 / JCM 15807 / FRC-32) (Geobacter daltonii).